Consider the following 178-residue polypeptide: PRA1 family protein 2 (178 aa).

Residues 1–41 (MSEVRLPPLRALDDFVLGSARLAAPDPCDPQRWCHRVINNL) are Cytoplasmic-facing. Residues 42–62 (LYYQTNYLLCFGIGLALAGYV) form a helical membrane-spanning segment. The Extracellular portion of the chain corresponds to 63–64 (RP). A helical membrane pass occupies residues 65–85 (LHTLLSALVVAVALGMLVWAA). At 86 to 96 (ETRAAVRRCRR) the chain is on the cytoplasmic side. The helical transmembrane segment at 97 to 119 (SHPAACLAAVLAVGLLVLWVVGG) threads the bilayer. Over 120-122 (ACT) the chain is Extracellular. The helical transmembrane segment at 123–140 (FLLSIAGPVLLILVHASL) threads the bilayer. Over 141–178 (RLRNLKNKIENKIESIGLKRTPMGLLLEALGQEQEAGS) the chain is Cytoplasmic.

It belongs to the PRA1 family. Interacts with CCR5 and GDE1.

It localises to the endosome membrane. In terms of biological role, may be involved in ER/Golgi transport and vesicular traffic. Plays a proapoptotic role in cerulenin-induced neuroblastoma apoptosis. This Macaca fascicularis (Crab-eating macaque) protein is PRA1 family protein 2 (PRAF2).